The chain runs to 2472 residues: MDPSGVKVLETAEDIQERRQQVLDRYHRFKELSTLRRQKLEDSYRFQFFQRDAEELEKWIQEKLQIASDENYKDPTNLQGKLQKHQAFEAEVQANSGAIVKLDETGNLMISEGHFASETIRTRLMELHRQWELLLEKMREKGIKLLQAQKLVQYLRECEDVMDWINDKEAIVTSEELGQDLEHVEVLQKKFEEFQTDMAAHEERVNEVNQFAAKLIQEQHPEEELIKTKQDEVNAAWQRLKGLALQRQGKLFGAAEVQRFNRDVDETISWIKEKEQLMASDDFGRDLASVQALLRKHEGLERDLAALEDKVKALCAEADRLQQSHPLSATQIQVKREELITNWEQIRTLAAERHARLNDSYRLQRFLADFRDLTSWVTEMKALINADELASDVAGAEALLDRHQEHKGEIDAHEDSFKSADESGQALLAAGHYASDEVREKLTVLSEERAALLELWELRRQQYEQCMDLQLFYRDTEQVDNWMSKQEAFLLNEDLGDSLDSVEALLKKHEDFEKSLSAQEEKITALDEFATKLIQNNHYAMEDVATRRDALLSRRNALHERAMRRRAQLADSFHLQQFFRDSDELKSWVNEKMKTATDEAYKDPSNLQGKVQKHQAFEAELSANQSRIDALEKAGQKLIDVNHYAKDEVAARMNEVISLWKKLLEATELKGIKLREANQQQQFNRNVEDIELWLYEVEGHLASDDYGKDLTNVQNLQKKHALLEADVAAHQDRIDGITIQARQFQDAGHFDAENIKKKQEALVARYEALKEPMVARKQKLADSLRLQQLFRDVEDEETWIREKEPIAASTNRGKDLIGVQNLLKKHQALQAEIAGHEPRIKAVTQKGNAMVEEGHFAAEDVKAKLHELNQKWEALKAKASQRRQDLEDSLQAQQYFADANEAESWMREKEPIVGSTDYGKDEDSAEALLKKHEALMSDLSAYGSSIQALREQAQSCRQQVAPTDDETGKELVLALYDYQEKSPREVTMKKGDILTLLNSTNKDWWKVEVNDRQGFVPAAYVKKLDPAQSASRENLLEEQGSIALRQEQIDNQTRITKEAGSVSLRMKQVEELYHSLLELGEKRKGMLEKSCKKFMLFREANELQQWINEKEAALTSEEVGADLEQVEVLQKKFDDFQKDLKANESRLKDINKVAEDLESEGLMAEEVQAVQQQEVYGMMPRDETDSKTASPWKSARLMVHTVATFNSIKELNERWRSLQQLAEERSQLLGSAHEVQRFHRDADETKEWIEEKNQALNTDNYGHDLASVQALQRKHEGFERDLAALGDKVNSLGETAERLIQSHPESAEDLQEKCTELNQAWSSLGKRADQRKAKLGDSHDLQRFLSDFRDLMSWINGIRGLVSSDELAKDVTGAEALLERHQEHRTEIDARAGTFQAFEQFGQQLLAHGHYASPEIKQKLDILDQERADLEKAWVQRRMMLDQCLELQLFHRDCEQAENWMAAREAFLNTEDKGDSLDSVEALIKKHEDFDKAINVQEEKIAALQAFADQLIAAGHYAKGDISSRRNEVLDRWRRLKAQMIEKRSKLGESQTLQQFSRDVDEIEAWISEKLQTASDESYKDPTNIQSKHQKHQAFEAELHANADRIRGVIDMGNSLIERGACAGSEDAVKARLAALADQWQFLVQKSAEKSQKLKEANKQQNFNTGIKDFDFWLSEVEALLASEDYGKDLASVNNLLKKHQLLEADISAHEDRLKDLNSQADSLMTSSAFDTSQVKDKRDTINGRFQKIKSMAASRRAKLNESHRLHQFFRDMDDEESWIKEKKLLVGSEDYGRDLTGVQNLRKKHKRLEAELAAHEPAIQGVLDTGKKLSDDNTIGKEEIQQRLAQFVEHWKELKQLAAARGQRLEESLEYQQFVANVEEEEAWINEKMTLVASEDYGDTLAAIQGLLKKHEAFETDFTVHKDRVNDVCTNGQDLIKKNNHHEENISSKMKGLNGKVSDLEKAAAQRKAKLDENSAFLQFNWKADVVESWIGEKENSLKTDDYGRDLSSVQTLLTKQETFDAGLQAFQQEGIANITALKDQLLAAKHVQSKAIEARHASLMKRWSQLLANSAARKKKLLEAQSHFRKVEDLFLTFAKKASAFNSWFENAEEDLTDPVRCNSLEEIKALREAHDAFRSSLSSAQADFNQLAELDRQIKSFRVASNPYTWFTMEALEETWRNLQKIIKERELELQKEQRRQEENDKLRQEFAQHANAFHQWIQETRTYLLDGSCMVEESGTLESQLEATKRKHQEIRAMRSQLKKIEDLGAAMEEALILDNKYTEHSTVGLAQQWDQLDQLGMRMQHNLEQQIQARNTTGVTEEALKEFSMMFKHFDKDKSGRLNHQEFKSCLRSLGYDLPMVEEGEPDPEFEAILDTVDPNRDGHVSLQEYMAFMISRETENVKSSEEIESAFRALSSEGKPYVTKEELYQNLTREQADYCVSHMKPYVDGKGRELPTAFDYVEFTRSLFVN.

Methionine 1 carries the post-translational modification N-acetylmethionine. Spectrin repeat units lie at residues 45-146 (RFQF…IKLL), 150-251 (KLVQ…QGKL), 256-358 (EVQR…ARLN), 361-465 (YRLQ…QYEQ), 468-570 (DLQL…AQLA), 574-676 (HLQQ…KLRE), 679-781 (QQQQ…QKLA), 785-888 (RLQQ…DLED), and 891-969 (QAQQ…ETGK). Serine 587 carries the phosphoserine modification. Lysine 637 is subject to N6-acetyllysine. At lysine 803 the chain carries N6-acetyllysine. Phosphoserine occurs at positions 924, 982, 999, 1029, 1031, and 1041. Residues 967 to 1026 (TGKELVLALYDYQEKSPREVTMKKGDILTLLNSTNKDWWKVEVNDRQGFVPAAYVKKLDP) enclose the SH3 domain. A Spectrin 10 repeat occupies 1096–1166 (LFREANELQQ…LESEGLMAEE (71 aa)). Phosphotyrosine is present on tyrosine 1176. Phosphoserine occurs at positions 1190, 1207, 1217, 1291, 1306, 1323, and 1338. The stretch at 1233–1336 (HEVQRFHRDA…RADQRKAKLG (104 aa)) is one Spectrin 11 repeat. Spectrin repeat units follow at residues 1339-1442 (HDLQ…MMLD) and 1446-1549 (ELQL…KLGE). The residue at position 1519 (lysine 1519) is an N6-acetyllysine. Residues serine 1550, serine 1557, serine 1578, serine 1615, and serine 1647 each carry the phosphoserine modification. Spectrin repeat units lie at residues 1552 to 1656 (TLQQ…KLKE), 1659 to 1762 (KQQN…KLNE), 1764 to 1868 (HRLH…RLEE), 1871 to 1974 (EYQQ…KLDE), 1978 to 2081 (FLQF…KLLE), 2092 to 2194 (LFLT…LELQ), and 2206 to 2310 (LRQE…NLEQ). Position 2020 is a phosphothreonine (threonine 2020). Residue lysine 2052 is modified to N6-acetyllysine. EF-hand domains are found at residues 2323–2358 (EALKEFSMMFKHFDKDKSGRLNHQEFKSCLRSLGYD), 2366–2401 (EPDPEFEAILDTVDPNRDGHVSLQEYMAFMISRETE), and 2404–2439 (KSSEEIESAFRALSSEGKPYVTKEELYQNLTREQAD). Residues aspartate 2336, aspartate 2338, serine 2340, arginine 2342, glutamate 2347, aspartate 2379, asparagine 2381, aspartate 2383, histidine 2385, and glutamate 2390 each coordinate Ca(2+). Residue lysine 2421 is modified to N6-acetyllysine.

It belongs to the spectrin family. Like erythrocyte spectrin, the spectrin-like proteins are capable of forming dimers which can further associate to tetramers. Interacts (via C-terminal spectrin repeats) with TRPC4. Interacts with CALM and EMD. Interacts with isoform 1 of ACP1. Identified in a complex with ACTN4, CASK, IQGAP1, MAGI2, NPHS1 and SPTBN1. Interacts with SHANK3 (via ANK repeats). Interacts with CLN3; this interaction regulates the fodrin localization at the plasma membrane. Phosphorylation of Tyr-1176 decreases sensitivity to cleavage by calpain in vitro.

It localises to the cytoplasm. The protein localises to the cytoskeleton. It is found in the cell cortex. In terms of biological role, fodrin, which seems to be involved in secretion, interacts with calmodulin in a calcium-dependent manner and is thus candidate for the calcium-dependent movement of the cytoskeleton at the membrane. The protein is Spectrin alpha chain, non-erythrocytic 1 (SPTAN1) of Homo sapiens (Human).